The sequence spans 74 residues: Small ribosomal subunit protein eS28 (74 aa).

It belongs to the eukaryotic ribosomal protein eS28 family.

The chain is Small ribosomal subunit protein eS28 from Halobacterium salinarum (strain ATCC 29341 / DSM 671 / R1).